A 423-amino-acid chain; its full sequence is TNF receptor-associated factor family protein DDB_G0277243 (423 aa).

An RING-type; degenerate zinc finger spans residues 20–66; sequence CSICVDPVLNSLPLEQHQALSCKNGHLLCQACWGKQLALRKECCICK. 2 consecutive TRAF-type zinc fingers follow at residues 124–179 and 180–237; these read SHLR…NDMP and THIE…CYLS. The region spanning 287–411 is the MATH domain; it reads RYKGNWTIEN…DGKLTINIDV (125 aa).

Belongs to the TNF receptor-associated factor family. A subfamily.

Its subcellular location is the cytoplasm. In terms of biological role, probable adapter protein and signal transducer that links members of the tumor necrosis factor receptor family to different signaling pathways by association with the receptor cytoplasmic domain and kinases. This chain is TNF receptor-associated factor family protein DDB_G0277243, found in Dictyostelium discoideum (Social amoeba).